Reading from the N-terminus, the 189-residue chain is MNLILFGPPAAGKGTQAKRLVEQRGMVQLSTGDMLRAAIASGSELGQKVKGVLDRGELVTDEIVIALIEDRLPEAEAAGGAIFDGFPRTVPQAQALDAMLARRGQKIDSVLRLKVDEPALIERISKRFAEQGRPDDNPEVFVTRLAAYNAQTAPLLPYYREQGKLTELDGMASVETVAGSIDAALSVVA.

10–15 contacts ATP; the sequence is AAGKGT. The tract at residues 30 to 59 is NMP; sequence STGDMLRAAIASGSELGQKVKGVLDRGELV. AMP is bound by residues threonine 31, arginine 36, 57-59, 85-88, and glutamine 92; these read ELV and GFPR. The LID stretch occupies residues 126-136; it reads KRFAEQGRPDD. ATP is bound at residue arginine 127. AMP is bound by residues arginine 133 and arginine 144. Alanine 172 is an ATP binding site.

This sequence belongs to the adenylate kinase family. As to quaternary structure, monomer.

Its subcellular location is the cytoplasm. The enzyme catalyses AMP + ATP = 2 ADP. It functions in the pathway purine metabolism; AMP biosynthesis via salvage pathway; AMP from ADP: step 1/1. Functionally, catalyzes the reversible transfer of the terminal phosphate group between ATP and AMP. Plays an important role in cellular energy homeostasis and in adenine nucleotide metabolism. This is Adenylate kinase from Caulobacter sp. (strain K31).